Reading from the N-terminus, the 638-residue chain is MTYALLNKIDAPADLRKLDRRELQTLADELRAYVLESVSQTGGHLSSNLGTVELTIALHYVFNTPDDRLVWDVGHQSYPHKILTGRRERMRTLRQWGGISGFPRRSESEYDTFGTAHSSTSISAALGMALGARTLGQKRVSVAVIGDGAMTAGMAFEALNNAGVYKDLPLVVVLNDNDMSISPPVGALNRHLARLLSGQFYAATKKGIEKVLSVAPPVLEFAKRFEEHAKGMMVPATLFEEFGFNYIGPIDGHDLNSLVPTLQNIRERALEGGGPQFLHVVTKKGQGYKLAEADPILYHGPGKFNPAEGIRPAAKPARKTYTQVFGDWLCDMAAADKRLVGITPAMREGSGMVEFEKRFPDRYYDVGIAEQHAVTFAGGLACEGLKPVVAIYSTFLQRGYDQLIHDVALQNLPVVFALDRAGLVGADGATHAGAYDIAYLRCIPNMMVMTPSDENECRQLLTTAFQQDCPTAVRYPRGSGPGAAIAADLAPVPVGKGVVRREAGARAGHRVGFLAFGSMVQPALGAAEALDATVADMRFVKPLDVALVKRLAADHDYLVTVEEGSVMGGAGSAVLEALAEAGIDKPVLTLGLPDRFVDHGDPAFLLQQCGLDAAGIERSVRERFGLDQPQVTVAPRVA.

Thiamine diphosphate-binding positions include H75 and 116-118 (AHS). D147 contacts Mg(2+). Residues 148–149 (GA), N177, Y288, and E370 each bind thiamine diphosphate. Residue N177 participates in Mg(2+) binding.

This sequence belongs to the transketolase family. DXPS subfamily. Homodimer. Mg(2+) serves as cofactor. Thiamine diphosphate is required as a cofactor.

The enzyme catalyses D-glyceraldehyde 3-phosphate + pyruvate + H(+) = 1-deoxy-D-xylulose 5-phosphate + CO2. Its pathway is metabolic intermediate biosynthesis; 1-deoxy-D-xylulose 5-phosphate biosynthesis; 1-deoxy-D-xylulose 5-phosphate from D-glyceraldehyde 3-phosphate and pyruvate: step 1/1. Its function is as follows. Catalyzes the acyloin condensation reaction between C atoms 2 and 3 of pyruvate and glyceraldehyde 3-phosphate to yield 1-deoxy-D-xylulose-5-phosphate (DXP). This is 1-deoxy-D-xylulose-5-phosphate synthase from Cupriavidus taiwanensis (strain DSM 17343 / BCRC 17206 / CCUG 44338 / CIP 107171 / LMG 19424 / R1) (Ralstonia taiwanensis (strain LMG 19424)).